Consider the following 158-residue polypeptide: Transcriptional regulator MraZ (158 aa).

SpoVT-AbrB domains are found at residues 7–54 (NIEA…PEEV) and 84–127 (VEII…AKER).

It belongs to the MraZ family. Forms oligomers.

Its subcellular location is the cytoplasm. It localises to the nucleoid. This is Transcriptional regulator MraZ from Bacteroides fragilis (strain ATCC 25285 / DSM 2151 / CCUG 4856 / JCM 11019 / LMG 10263 / NCTC 9343 / Onslow / VPI 2553 / EN-2).